Here is a 221-residue protein sequence, read N- to C-terminus: uncharacterized protein (221 aa).

The Extracellular segment spans residues 1 to 45 (MYAPIRSPITELNESTPSSIPVATSYATCSASFAKLVALLVDDMA). Residues 46 to 66 (GLSIVLSEIYIYFKLLFLIVI) form a helical membrane-spanning segment. Topologically, residues 67 to 221 (TESIQNKLED…KYIVVIKVEQ (155 aa)) are cytoplasmic.

It localises to the host membrane. This is an uncharacterized protein from Acidianus filamentous virus 1 (isolate United States/Yellowstone) (AFV-1).